The following is a 284-amino-acid chain: Polyamine aminopropyltransferase (284 aa).

In terms of domain architecture, PABS spans 4–238 (EVWNTERLHD…GPMALGWGSH (235 aa)). Gln-33 provides a ligand contact to S-methyl-5'-thioadenosine. Positions 64 and 88 each coordinate spermidine. Residues Glu-108 and 140–141 (DG) contribute to the S-methyl-5'-thioadenosine site. The Proton acceptor role is filled by Asp-158. 158 to 161 (DSTD) is a spermidine binding site. Pro-165 is a binding site for S-methyl-5'-thioadenosine.

The protein belongs to the spermidine/spermine synthase family. Homodimer or homotetramer.

The protein resides in the cytoplasm. It catalyses the reaction S-adenosyl 3-(methylsulfanyl)propylamine + putrescine = S-methyl-5'-thioadenosine + spermidine + H(+). Its pathway is amine and polyamine biosynthesis; spermidine biosynthesis; spermidine from putrescine: step 1/1. Its function is as follows. Catalyzes the irreversible transfer of a propylamine group from the amino donor S-adenosylmethioninamine (decarboxy-AdoMet) to putrescine (1,4-diaminobutane) to yield spermidine. This Ruegeria sp. (strain TM1040) (Silicibacter sp.) protein is Polyamine aminopropyltransferase.